Consider the following 286-residue polypeptide: 4-hydroxybenzoate octaprenyltransferase (286 aa).

The next 8 helical transmembrane spans lie at 20–40, 43–63, 95–115, 116–136, 142–162, 167–187, 210–230, and 235–255; these read IGTF…AGGM, LKVL…GCII, ILFV…NPLV, VQLS…KRFT, FLGV…LGTV, WWLF…YAMV, QIIG…GLSA, and VFAL…KLIF.

Belongs to the UbiA prenyltransferase family. It depends on Mg(2+) as a cofactor.

Its subcellular location is the cell inner membrane. The catalysed reaction is all-trans-octaprenyl diphosphate + 4-hydroxybenzoate = 4-hydroxy-3-(all-trans-octaprenyl)benzoate + diphosphate. The protein operates within cofactor biosynthesis; ubiquinone biosynthesis. In terms of biological role, catalyzes the prenylation of para-hydroxybenzoate (PHB) with an all-trans polyprenyl group. Mediates the second step in the final reaction sequence of ubiquinone-8 (UQ-8) biosynthesis, which is the condensation of the polyisoprenoid side chain with PHB, generating the first membrane-bound Q intermediate 3-octaprenyl-4-hydroxybenzoate. The protein is 4-hydroxybenzoate octaprenyltransferase of Shewanella loihica (strain ATCC BAA-1088 / PV-4).